We begin with the raw amino-acid sequence, 466 residues long: Argininosuccinate lyase (466 aa).

It belongs to the lyase 1 family. Argininosuccinate lyase subfamily.

It is found in the cytoplasm. The catalysed reaction is 2-(N(omega)-L-arginino)succinate = fumarate + L-arginine. Its pathway is amino-acid biosynthesis; L-arginine biosynthesis; L-arginine from L-ornithine and carbamoyl phosphate: step 3/3. This chain is Argininosuccinate lyase, found in Campylobacter concisus (strain 13826).